The primary structure comprises 513 residues: Maturase K (513 aa).

The protein belongs to the intron maturase 2 family. MatK subfamily.

Its subcellular location is the plastid. It is found in the chloroplast. Its function is as follows. Usually encoded in the trnK tRNA gene intron. Probably assists in splicing its own and other chloroplast group II introns. The polypeptide is Maturase K (Pinus resinosa (Red pine)).